Consider the following 151-residue polypeptide: uncharacterized protein (151 aa).

A disordered region spans residues 1-151; sequence MAELASIIRP…SSKTTTLKAR (151 aa). Residues 33–45 are compositionally biased toward low complexity; it reads STGLSDLLMLLQS. The span at 53 to 64 shows a compositional bias: basic residues; the sequence is RARRRTVCRPRR. Residues 108–123 show a composition bias toward low complexity; the sequence is SSSSNTSSGTATSGES. Residues 126–141 show a composition bias toward basic and acidic residues; sequence ADWRDSSSASDDDRIP.

This is an uncharacterized protein from Aotus trivirgatus (Three-striped night monkey).